The chain runs to 306 residues: Curved DNA-binding protein (306 aa).

Residues 5 to 69 (DYYAIMGVKP…QRRAEYDQMW (65 aa)) form the J domain.

Its subcellular location is the cytoplasm. It localises to the nucleoid. Its function is as follows. DNA-binding protein that preferentially recognizes a curved DNA sequence. It is probably a functional analog of DnaJ; displays overlapping activities with DnaJ, but functions under different conditions, probably acting as a molecular chaperone in an adaptive response to environmental stresses other than heat shock. Lacks autonomous chaperone activity; binds native substrates and targets them for recognition by DnaK. Its activity is inhibited by the binding of CbpM. This chain is Curved DNA-binding protein, found in Shigella dysenteriae serotype 1 (strain Sd197).